The sequence spans 422 residues: Putative polyketide beta-ketoacyl synthase 1 (422 aa).

Positions 2–416 (TRRVAVTGIG…GFQSAVLLTG (415 aa)) constitute a Ketosynthase family 3 (KS3) domain. Active-site for beta-ketoacyl synthase activity residues include C169, H309, and H346.

It belongs to the thiolase-like superfamily. Beta-ketoacyl-ACP synthases family.

It functions in the pathway antibiotic biosynthesis; curamycin biosynthesis. This is Putative polyketide beta-ketoacyl synthase 1 (curA) from Streptomyces cyaneus (Streptomyces curacoi).